Reading from the N-terminus, the 173-residue chain is bZIP transcription factor 44 (173 aa).

The interval 1 to 65 (MNNKTEMGSS…SRMRKQKHLD (65 aa)) is disordered. Over residues 8–22 (GSSTSGNCSSVSTTG) the composition is skewed to low complexity. Basic and acidic residues predominate over residues 30 to 41 (SDLRQRDLIDER). Residues 39 to 102 (DERKRKRKQS…VTIEAENDIL (64 aa)) enclose the bZIP domain. Residues 41-62 (RKRKRKQSNRESARRSRMRKQK) are basic motif. The tract at residues 67–81 (LTAQVTHLRKENAQI) is leucine-zipper.

Forms heterodimers with BZIP1, BZIP9, BZIP10, BZIP25 and BZIP63. As to expression, expressed in the micropylar endosperm and radicle tip in early germinating seeds.

Its subcellular location is the nucleus. Transcription factor that binds to the DNA G-box motif 5'-CACGTG-3' of MAN7 promoter. Involved in the positive regulation of seed germination through MAN7 gene activation. MAN7 is required for both, loosening of the micropylar endosperm, and rupture of the seed coat in germinating seeds. This chain is bZIP transcription factor 44, found in Arabidopsis thaliana (Mouse-ear cress).